Consider the following 671-residue polypeptide: DNA ligase (671 aa).

NAD(+) is bound by residues 32 to 36 (DAEYD), 81 to 82 (SL), and Glu113. Residue Lys115 is the N6-AMP-lysine intermediate of the active site. NAD(+) is bound by residues Arg136, Glu173, Lys290, and Lys314. Positions 408, 411, 426, and 432 each coordinate Zn(2+). Residues 593–671 (EIDSPFAGKT…EAEMIRLLGA (79 aa)) enclose the BRCT domain.

This sequence belongs to the NAD-dependent DNA ligase family. LigA subfamily. Mg(2+) serves as cofactor. Requires Mn(2+) as cofactor.

It carries out the reaction NAD(+) + (deoxyribonucleotide)n-3'-hydroxyl + 5'-phospho-(deoxyribonucleotide)m = (deoxyribonucleotide)n+m + AMP + beta-nicotinamide D-nucleotide.. In terms of biological role, DNA ligase that catalyzes the formation of phosphodiester linkages between 5'-phosphoryl and 3'-hydroxyl groups in double-stranded DNA using NAD as a coenzyme and as the energy source for the reaction. It is essential for DNA replication and repair of damaged DNA. In Salmonella typhimurium (strain LT2 / SGSC1412 / ATCC 700720), this protein is DNA ligase.